The chain runs to 325 residues: Outer spore wall protein LDS1 (325 aa).

At 1–91 (MSFTGSLALA…NTNKSSYSTT (91 aa)) the chain is on the cytoplasmic side. Residues 92 to 112 (MLGILSSYLIMFALVSFVYWA) traverse the membrane as a helical segment. Topologically, residues 113 to 118 (TITPMY) are extracellular. Residues 119 to 139 (TAFLIVLGPIGLFIAIFHSFL) form a helical membrane-spanning segment. Topologically, residues 140 to 208 (QANVFTLLFM…VKYMLGLSVL (69 aa)) are cytoplasmic. Residues 209–229 (FVLLVISFFPLIGPILFHILI) form a helical membrane-spanning segment. The Extracellular segment spans residues 230 to 263 (SPFITQIYFTKVLRLQNFDNIQRRENIYLHAGQY). The chain crosses the membrane as a helical span at residues 264–284 (ASFGFLAGLIESVPILAGFAI). Residues 285 to 325 (STNTIGSVLFNLDHPMVPENLVETQAEIEAAPQDINQQPNQ) are Cytoplasmic-facing.

This sequence belongs to the LDS family.

The protein localises to the prospore membrane. It localises to the lipid droplet. Its subcellular location is the spore wall. Involved in spore wall assembly. The protein is Outer spore wall protein LDS1 of Saccharomyces cerevisiae (strain ATCC 204508 / S288c) (Baker's yeast).